A 293-amino-acid polypeptide reads, in one-letter code: Epidermal growth factor-like protein 8 (293 aa).

An N-terminal signal peptide occupies residues 1–28; the sequence is MGLWAELCISLRGLSFFLVLMTGEGTRG. An EMI domain is found at 34–112; sequence SLGVCSKQTL…PHPGALTCDA (79 aa). Cystine bridges form between C38-C97, C65-C71, C96-C110, C114-C124, C118-C130, C132-C141, C148-C159, C155-C168, and C170-C183. N-linked (GlcNAc...) asparagine glycosylation is present at N50. One can recognise an EGF-like 1 domain in the interval 111 to 142; sequence DAICSKPCLNGGVCTGPDRCECAPGWGGKHCH. Positions 144–184 constitute an EGF-like 2; calcium-binding domain; that stretch reads DVDECRASLTLCSHGCLNTLGSFLCSCPHPLVLGLDGRTCA. A coiled-coil region spans residues 206 to 235; it reads SEEERALRWEVAELRGRLEKLEQWATQAGA.

In terms of tissue distribution, ubiquitously expressed in brain, kidney, thymus and lung.

It localises to the secreted. The protein is Epidermal growth factor-like protein 8 (Egfl8) of Mus musculus (Mouse).